Reading from the N-terminus, the 395-residue chain is Acetate kinase 2 (395 aa).

Asparagine 8 serves as a coordination point for Mg(2+). Lysine 15 is an ATP binding site. A substrate-binding site is contributed by arginine 89. Aspartate 146 functions as the Proton donor/acceptor in the catalytic mechanism. Residues 206–210 (HIGNG), 283–285 (DMR), and 331–335 (GVGEN) each bind ATP. Residue glutamate 383 participates in Mg(2+) binding.

Belongs to the acetokinase family. Homodimer. The cofactor is Mg(2+). Mn(2+) is required as a cofactor.

The protein localises to the cytoplasm. The catalysed reaction is acetate + ATP = acetyl phosphate + ADP. Its pathway is metabolic intermediate biosynthesis; acetyl-CoA biosynthesis; acetyl-CoA from acetate: step 1/2. Functionally, catalyzes the formation of acetyl phosphate from acetate and ATP. Can also catalyze the reverse reaction. The polypeptide is Acetate kinase 2 (Lactococcus lactis subsp. lactis (strain IL1403) (Streptococcus lactis)).